Here is a 186-residue protein sequence, read N- to C-terminus: Casparian strip membrane protein 6 (186 aa).

The Cytoplasmic segment spans residues 1-23; sequence MKAGPIELGEGKSSAPKAAVNRG. The chain crosses the membrane as a helical span at residues 24–44; that stretch reads VAILDFILRILAFIGTLGSAI. The Extracellular segment spans residues 45–73; sequence SMATTNETLPFFTQFIRFRAEYDDLPTFT. Asn-50 is a glycosylation site (N-linked (GlcNAc...) asparagine). Residues 74–94 form a helical membrane-spanning segment; sequence FFVVANGVVSAYLLFSLPFSI. The Cytoplasmic segment spans residues 95–106; the sequence is FNIVRSKAQNSR. A helical transmembrane segment spans residues 107 to 127; sequence ILLIILDTAMLGLLSAGASAA. The Extracellular portion of the chain corresponds to 128–160; the sequence is AAIVYLAHQGNVRTNWSAICQQFNSFCERISGS. N-linked (GlcNAc...) asparagine glycosylation occurs at Asn-142. The chain crosses the membrane as a helical span at residues 161-181; that stretch reads LIGSFIGVVVFILLISLSAVA. Residues 182-186 lie on the Cytoplasmic side of the membrane; the sequence is LSRHK.

It belongs to the Casparian strip membrane proteins (CASP) family. As to quaternary structure, homodimer and heterodimers.

The protein resides in the cell membrane. In terms of biological role, regulates membrane-cell wall junctions and localized cell wall deposition. Required for establishment of the Casparian strip membrane domain (CSD) and the subsequent formation of Casparian strips, a cell wall modification of the root endodermis that determines an apoplastic barrier between the intraorganismal apoplasm and the extraorganismal apoplasm and prevents lateral diffusion. The chain is Casparian strip membrane protein 6 from Populus trichocarpa (Western balsam poplar).